The primary structure comprises 101 residues: Protein S100-A11 (101 aa).

EF-hand domains lie at Ile-13–Ser-48 and Lys-54–Ala-89. Residues Asn-30, Lys-32, Glu-37, Asp-67, Asn-69, Asp-71, Gln-73, and Glu-78 each contribute to the Ca(2+) site.

It belongs to the S-100 family. In terms of assembly, homodimer; disulfide-linked. In terms of tissue distribution, smooth muscle and non-muscle tissues.

This is Protein S100-A11 (S100A11) from Gallus gallus (Chicken).